The chain runs to 313 residues: 4-hydroxy-3-methylbut-2-enyl diphosphate reductase (313 aa).

Position 12 (C12) interacts with [4Fe-4S] cluster. Positions 41 and 74 each coordinate (2E)-4-hydroxy-3-methylbut-2-enyl diphosphate. The dimethylallyl diphosphate site is built by H41 and H74. The isopentenyl diphosphate site is built by H41 and H74. C96 serves as a coordination point for [4Fe-4S] cluster. A (2E)-4-hydroxy-3-methylbut-2-enyl diphosphate-binding site is contributed by H124. H124 is a binding site for dimethylallyl diphosphate. H124 contributes to the isopentenyl diphosphate binding site. The active-site Proton donor is the E126. T164 serves as a coordination point for (2E)-4-hydroxy-3-methylbut-2-enyl diphosphate. Residue C194 participates in [4Fe-4S] cluster binding. Residues S222, S223, N224, and S266 each coordinate (2E)-4-hydroxy-3-methylbut-2-enyl diphosphate. S222, S223, N224, and S266 together coordinate dimethylallyl diphosphate. Isopentenyl diphosphate-binding residues include S222, S223, N224, and S266.

It belongs to the IspH family. It depends on [4Fe-4S] cluster as a cofactor.

The catalysed reaction is isopentenyl diphosphate + 2 oxidized [2Fe-2S]-[ferredoxin] + H2O = (2E)-4-hydroxy-3-methylbut-2-enyl diphosphate + 2 reduced [2Fe-2S]-[ferredoxin] + 2 H(+). It carries out the reaction dimethylallyl diphosphate + 2 oxidized [2Fe-2S]-[ferredoxin] + H2O = (2E)-4-hydroxy-3-methylbut-2-enyl diphosphate + 2 reduced [2Fe-2S]-[ferredoxin] + 2 H(+). It functions in the pathway isoprenoid biosynthesis; dimethylallyl diphosphate biosynthesis; dimethylallyl diphosphate from (2E)-4-hydroxy-3-methylbutenyl diphosphate: step 1/1. Its pathway is isoprenoid biosynthesis; isopentenyl diphosphate biosynthesis via DXP pathway; isopentenyl diphosphate from 1-deoxy-D-xylulose 5-phosphate: step 6/6. Catalyzes the conversion of 1-hydroxy-2-methyl-2-(E)-butenyl 4-diphosphate (HMBPP) into a mixture of isopentenyl diphosphate (IPP) and dimethylallyl diphosphate (DMAPP). Acts in the terminal step of the DOXP/MEP pathway for isoprenoid precursor biosynthesis. The sequence is that of 4-hydroxy-3-methylbut-2-enyl diphosphate reductase from Burkholderia pseudomallei (strain 1026b).